A 314-amino-acid polypeptide reads, in one-letter code: Palmitoyl-protein thioesterase 1 (314 aa).

Positions 1–25 (MISICCSRFSCILFLLFLIFSLVLS) are cleaved as a signal peptide. 3 disulfide bridges follow: Cys53-Cys54, Cys104-Cys136, and Cys160-Cys168. The active-site Nucleophile is Ser123. Asn240 carries an N-linked (GlcNAc...) asparagine glycan. Residues Asp241 and His295 contribute to the active site.

Belongs to the palmitoyl-protein thioesterase family. Ubiquitously expressed.

It is found in the lysosome. The enzyme catalyses S-hexadecanoyl-L-cysteinyl-[protein] + H2O = L-cysteinyl-[protein] + hexadecanoate + H(+). In terms of biological role, cleaves thioester-linked long fatty acyl groups such as palmitate from modified cysteine residues in proteins or peptides. The protein is Palmitoyl-protein thioesterase 1 (Ppt1) of Drosophila melanogaster (Fruit fly).